The primary structure comprises 308 residues: SAP30-binding protein (308 aa).

The disordered stretch occupies residues 15 to 101 (AEYSDPESDG…EAEKRDPQEL (87 aa)). Ser18, Ser22, Ser43, and Ser52 each carry phosphoserine. Residues 57–78 (DEDGYEEEEDENSKQSEDDDSE) are compositionally biased toward acidic residues. Over residues 79–99 (TEKPEADDPKDNTEAEKRDPQ) the composition is skewed to basic and acidic residues. Lys95 is covalently cross-linked (Glycyl lysine isopeptide (Lys-Gly) (interchain with G-Cter in SUMO2)). Ser113 is subject to Phosphoserine. Glycyl lysine isopeptide (Lys-Gly) (interchain with G-Cter in SUMO2) cross-links involve residues Lys220, Lys304, and Lys305.

This sequence belongs to the HCNGP family. In terms of assembly, interacts with histone deacetylase complex subunit SAP30.

It is found in the nucleus. Functionally, plays a role in transcriptional repression by promoting histone deacetylase activity, leading to deacetylation of histone H3. May be involved in the regulation of beta-2-microglobulin genes. The chain is SAP30-binding protein (Sap30bp) from Mus musculus (Mouse).